Reading from the N-terminus, the 258-residue chain is Phycoerythrobilin:ferredoxin oxidoreductase (258 aa).

This sequence belongs to the HY2 family.

The enzyme catalyses (3Z)-phycoerythrobilin + oxidized 2[4Fe-4S]-[ferredoxin] = 15,16-dihydrobiliverdin + reduced 2[4Fe-4S]-[ferredoxin] + 2 H(+). In terms of biological role, catalyzes the two-electron reduction of the C2 and C3(1) diene system of 15,16-dihydrobiliverdin. The chain is Phycoerythrobilin:ferredoxin oxidoreductase from Prochlorococcus marinus (strain NATL2A).